The following is a 456-amino-acid chain: UDP-N-acetylmuramate--L-alanine ligase (456 aa).

Residue 112–118 (GAHGKTT) participates in ATP binding.

It belongs to the MurCDEF family.

It localises to the cytoplasm. It catalyses the reaction UDP-N-acetyl-alpha-D-muramate + L-alanine + ATP = UDP-N-acetyl-alpha-D-muramoyl-L-alanine + ADP + phosphate + H(+). The protein operates within cell wall biogenesis; peptidoglycan biosynthesis. Functionally, cell wall formation. The chain is UDP-N-acetylmuramate--L-alanine ligase from Desulfatibacillum aliphaticivorans.